Here is a 108-residue protein sequence, read N- to C-terminus: Cell division topological specificity factor (108 aa).

Belongs to the MinE family.

In terms of biological role, prevents the cell division inhibition by proteins MinC and MinD at internal division sites while permitting inhibition at polar sites. This ensures cell division at the proper site by restricting the formation of a division septum at the midpoint of the long axis of the cell. This Prochlorococcus marinus (strain MIT 9215) protein is Cell division topological specificity factor.